The primary structure comprises 938 residues: Glutamate receptor ionotropic, NMDA 1 (938 aa).

Residues 1–18 (MSTMRLLTLALLFSCSVA) form the signal peptide. The Extracellular portion of the chain corresponds to 19-559 (RAACDPKIVN…TLDSFMQPFQ (541 aa)). N-linked (GlcNAc...) asparagine glycosylation is found at Asn61, Asn203, Asn239, Asn276, Asn300, Asn350, Asn368, Asn440, Asn471, and Asn491. A disulfide bridge connects residues Cys79 and Cys308. Cystine bridges form between Cys420–Cys454 and Cys436–Cys455. Pro516, Thr518, and Arg523 together coordinate glycine. The chain crosses the membrane as a helical span at residues 560-580 (STLWLLVGLSVHVVAVMLYLL). Over 581–604 (DRFSPFGRFKVNSEEEEEDALTLS) the chain is Cytoplasmic. Positions 603–624 (LSSAMWFSWGVLLNSGIGEGAP) are pore-forming. The segment at residues 605 to 615 (SAMWFSWGVLL) is an intramembrane region (discontinuously helical). At 616 to 627 (NSGIGEGAPRSF) the chain is on the cytoplasmic side. The helical transmembrane segment at 628–648 (SARILGMVWAGFAMIIVASYT) threads the bilayer. Topologically, residues 649–811 (ANLAAFLVLD…SNAPATLTFE (163 aa)) are extracellular. N-linked (GlcNAc...) asparagine glycosylation is present at Asn674. Glycine contacts are provided by Ser688 and Asp732. Cys744 and Cys798 form a disulfide bridge. An N-linked (GlcNAc...) asparagine glycan is attached at Asn771. Residues 812–835 (NMAGVFMLVAGGIVAGIFLIFIEI) traverse the membrane as a helical segment. Residues 836-938 (AYKRHKDARR…LQLCSRHRES (103 aa)) are Cytoplasmic-facing. Phosphoserine; by PKC is present on residues Ser889, Ser890, Ser896, and Ser897. A disordered region spans residues 889–938 (SSFKRRRSSKDTSTGGGRGALQNQKDTVLPRRAIEREEGQLQLCSRHRES). The segment covering 916–927 (VLPRRAIEREEG) has biased composition (basic and acidic residues).

Belongs to the glutamate-gated ion channel (TC 1.A.10.1) family. NR1/GRIN1 subfamily. Heterotetramer; the NMDAR subunits are modular and harbor tiered domains that function in concert to regulate opening and closing of the cation-selective ion channel pore. Forms heterotetrameric channels composed of two GluN1/zeta subunits (GRIN1), and two identical GluN2/epsilon subunits (GRIN2A, GRIN2B, GRIN2C or GRIN2D) or GluN3 subunits (GRIN3A or GRIN3B) (in vitro). Can also form heterotetrameric channels that contain at least two GluN1 subunits and at least two different GluN2 subunits (or a combination of one GluN2 and one GluN3 subunits) (in vitro). In vivo, the subunit composition may vary in function of the expression levels of the different subunits. Found in a complex with GRIN2A or GRIN2B, GRIN3A and PPP2CB. Found in a complex with GRIN2A or GRIN2B and GRIN3B. Interacts with SNX27 (via PDZ domain); the interaction is required for recycling to the plasma membrane when endocytosed and prevent degradation in lysosomes. Interacts with DLG4 and MPDZ. Interacts with LRFN1 and LRFN2. Interacts with MYZAP. Found in a complex with DLG4 and PRR7. Found in a complex with GRIN2B and PRR7. Interacts with PRR7; the interaction is reduced following NMDA receptor activity. In terms of processing, NMDA is probably regulated by C-terminal phosphorylation of an isoform of GRIN1 by PKC. Dephosphorylated on Ser-897 probably by protein phosphatase 2A (PPP2CB). Its phosphorylated state is influenced by the formation of the NMDAR-PPP2CB complex and the NMDAR channel activity.

The protein resides in the cell membrane. It is found in the postsynaptic cell membrane. It localises to the postsynaptic density membrane. Its subcellular location is the synaptic cell membrane. It catalyses the reaction Ca(2+)(in) = Ca(2+)(out). The catalysed reaction is Na(+)(in) = Na(+)(out). It carries out the reaction K(+)(in) = K(+)(out). With respect to regulation, NMDA glutamate receptor activity is inhbited by Mg2(+) in a voltage-dependent manner; Mg2(+)-induced blockade occurs only at negative potentials and decreases with membrane depolarization. 7-chlorokynurenate (50 uM) or Zn2(+) (100 uM) partially inhibit the NMDA glutamate receptor activity, while acide 2-amino-5-phosphonovalerique(100 uM) almost completely blocked the NMDA glutamate receptor activity. Dizocilpine (1 uM) results in long lasting and almost complete block of the NMDA glutamate receptor activity. Its function is as follows. Component of N-methyl-D-aspartate (NMDA) receptors (NMDARs) that function as heterotetrameric, ligand-gated cation channels with high calcium permeability and voltage-dependent block by Mg(2+). NMDARs participate in synaptic plasticity for learning and memory formation by contributing to the long-term potentiation (LTP). Channel activation requires binding of the neurotransmitter L-glutamate to the GluN2 subunit, glycine or D-serine binding to the GluN1 subunit, plus membrane depolarization to eliminate channel inhibition by Mg(2+). NMDARs mediate simultaneously the potasium efflux and the influx of calcium and sodium. Each GluN2 or GluN3 subunit confers differential attributes to channel properties, including activation, deactivation and desensitization kinetics, pH sensitivity, Ca2(+) permeability, and binding to allosteric modulators. The polypeptide is Glutamate receptor ionotropic, NMDA 1 (Homo sapiens (Human)).